Reading from the N-terminus, the 429-residue chain is Citrate synthase, plasmid (429 aa).

Active-site residues include His306 and Asp364.

It belongs to the citrate synthase family.

It catalyses the reaction oxaloacetate + acetyl-CoA + H2O = citrate + CoA + H(+). It functions in the pathway carbohydrate metabolism; tricarboxylic acid cycle; isocitrate from oxaloacetate: step 1/2. Its function is as follows. The exact function of the plasmid-encoded citrate synthase is not clear, it could help nodulation by allowing the bacteria to use citrate as a chelator of iron and calcium. This chain is Citrate synthase, plasmid (pcsA), found in Rhizobium tropici.